Reading from the N-terminus, the 475-residue chain is Aspartyl/glutamyl-tRNA(Asn/Gln) amidotransferase subunit B (475 aa).

It belongs to the GatB/GatE family. GatB subfamily. In terms of assembly, heterotrimer of A, B and C subunits.

It carries out the reaction L-glutamyl-tRNA(Gln) + L-glutamine + ATP + H2O = L-glutaminyl-tRNA(Gln) + L-glutamate + ADP + phosphate + H(+). The catalysed reaction is L-aspartyl-tRNA(Asn) + L-glutamine + ATP + H2O = L-asparaginyl-tRNA(Asn) + L-glutamate + ADP + phosphate + 2 H(+). Allows the formation of correctly charged Asn-tRNA(Asn) or Gln-tRNA(Gln) through the transamidation of misacylated Asp-tRNA(Asn) or Glu-tRNA(Gln) in organisms which lack either or both of asparaginyl-tRNA or glutaminyl-tRNA synthetases. The reaction takes place in the presence of glutamine and ATP through an activated phospho-Asp-tRNA(Asn) or phospho-Glu-tRNA(Gln). This chain is Aspartyl/glutamyl-tRNA(Asn/Gln) amidotransferase subunit B, found in Staphylococcus haemolyticus (strain JCSC1435).